The chain runs to 84 residues: Putative membrane protein insertion efficiency factor (84 aa).

This sequence belongs to the UPF0161 family.

It localises to the cell inner membrane. Could be involved in insertion of integral membrane proteins into the membrane. The protein is Putative membrane protein insertion efficiency factor of Shewanella pealeana (strain ATCC 700345 / ANG-SQ1).